The sequence spans 143 residues: Transcriptional regulator MraZ (143 aa).

SpoVT-AbrB domains lie at 5–47 and 76–119; these read EYQH…PKDE and AIES…SKDN.

It belongs to the MraZ family. In terms of assembly, forms oligomers.

Its subcellular location is the cytoplasm. The protein resides in the nucleoid. The polypeptide is Transcriptional regulator MraZ (Oenococcus oeni (strain ATCC BAA-331 / PSU-1)).